We begin with the raw amino-acid sequence, 321 residues long: Peroxidase 70 (321 aa).

The N-terminal stretch at 1–25 is a signal peptide; that stretch reads MASSSFTSLSVMVLLCLAAAAVASA. Glutamine 26 carries the post-translational modification Pyrrolidone carboxylic acid. Cystine bridges form between cysteine 36–cysteine 116, cysteine 69–cysteine 74, cysteine 122–cysteine 317, and cysteine 201–cysteine 226. The active-site Proton acceptor is the histidine 67. Positions 68, 71, 73, 75, and 77 each coordinate Ca(2+). Asparagine 81 carries an N-linked (GlcNAc...) asparagine glycan. Substrate is bound at residue proline 164. A glycan (N-linked (GlcNAc...) asparagine) is linked at asparagine 172. Histidine 194 is a binding site for heme b. Position 195 (threonine 195) interacts with Ca(2+). Asparagine 210 carries an N-linked (GlcNAc...) asparagine glycan. Ca(2+)-binding residues include aspartate 241, threonine 244, and aspartate 249.

The protein belongs to the peroxidase family. Classical plant (class III) peroxidase subfamily. Heme b is required as a cofactor. Requires Ca(2+) as cofactor.

The protein resides in the secreted. The enzyme catalyses 2 a phenolic donor + H2O2 = 2 a phenolic radical donor + 2 H2O. Functionally, removal of H(2)O(2), oxidation of toxic reductants, biosynthesis and degradation of lignin, suberization, auxin catabolism, response to environmental stresses such as wounding, pathogen attack and oxidative stress. These functions might be dependent on each isozyme/isoform in each plant tissue. The chain is Peroxidase 70 (PER70) from Zea mays (Maize).